A 215-amino-acid polypeptide reads, in one-letter code: MSKVYDWFEERLEIQAIADDITSKYVPPHVNIFYCLGGITLTCFLVQVATGFAMTFYYRPTVTDAFASVQYIMTEANFGWLIRSVHRWSASMMVLMMILHVFRVYLTGGFKKPRELTWVTGVVLGVLTASFGVTGYSLPRDQIGYWAVKIVTGVPEAIPVIGSPLVELLRGSASVGQSTLTRFYSLHTFVLPLLTAVFMLMHFPMIRKQGISGPL.

The helical transmembrane segment at 32–52 (IFYCLGGITLTCFLVQVATGF) threads the bilayer. Cys35 lines the heme c pocket. 2 residues coordinate heme b: His86 and His100. 3 helical membrane-spanning segments follow: residues 90 to 110 (ASMM…TGGF), 116 to 136 (LTWV…VTGY), and 186 to 206 (LHTF…FPMI). Residues His187 and His202 each coordinate heme b.

This sequence belongs to the cytochrome b family. PetB subfamily. In terms of assembly, the 4 large subunits of the cytochrome b6-f complex are cytochrome b6, subunit IV (17 kDa polypeptide, PetD), cytochrome f and the Rieske protein, while the 4 small subunits are PetG, PetL, PetM and PetN. The complex functions as a dimer. Heme b serves as cofactor. Heme c is required as a cofactor.

The protein resides in the plastid. It localises to the chloroplast thylakoid membrane. In terms of biological role, component of the cytochrome b6-f complex, which mediates electron transfer between photosystem II (PSII) and photosystem I (PSI), cyclic electron flow around PSI, and state transitions. In Lactuca sativa (Garden lettuce), this protein is Cytochrome b6.